An 876-amino-acid chain; its full sequence is Probable DNA-directed RNA polymerase catalytic subunit (876 aa).

This sequence belongs to the RNA polymerase beta chain family. Interacts with LEF-4, LEF-9, and p47.

It carries out the reaction RNA(n) + a ribonucleoside 5'-triphosphate = RNA(n+1) + diphosphate. Component of the viral DNA-dependent RNA polymerase which is composed of four equimolar subunits of LEF-4, LEF-8, LEF-9, and p47. Plays an essential role in late and very late gene expression. In Autographa californica nuclear polyhedrosis virus (AcMNPV), this protein is Probable DNA-directed RNA polymerase catalytic subunit (LEF-8).